A 427-amino-acid polypeptide reads, in one-letter code: 3-phosphoshikimate 1-carboxyvinyltransferase (427 aa).

3-phosphoshikimate is bound by residues Lys-20, Ser-21, and Arg-25. Lys-20 is a binding site for phosphoenolpyruvate. Gly-92 and Arg-120 together coordinate phosphoenolpyruvate. 4 residues coordinate 3-phosphoshikimate: Ser-166, Gln-168, Asp-312, and Lys-339. Gln-168 contacts phosphoenolpyruvate. Asp-312 functions as the Proton acceptor in the catalytic mechanism. The phosphoenolpyruvate site is built by Arg-343 and Arg-385.

It belongs to the EPSP synthase family. In terms of assembly, monomer.

The protein localises to the cytoplasm. The catalysed reaction is 3-phosphoshikimate + phosphoenolpyruvate = 5-O-(1-carboxyvinyl)-3-phosphoshikimate + phosphate. It participates in metabolic intermediate biosynthesis; chorismate biosynthesis; chorismate from D-erythrose 4-phosphate and phosphoenolpyruvate: step 6/7. Functionally, catalyzes the transfer of the enolpyruvyl moiety of phosphoenolpyruvate (PEP) to the 5-hydroxyl of shikimate-3-phosphate (S3P) to produce enolpyruvyl shikimate-3-phosphate and inorganic phosphate. In Streptococcus pneumoniae serotype 19F (strain G54), this protein is 3-phosphoshikimate 1-carboxyvinyltransferase.